The following is a 514-amino-acid chain: CENP-B homolog protein 1 (514 aa).

Positions 69–144 (DIKKIRAPKF…RRRHYIQQSA (76 aa)) constitute an HTH CENPB-type domain.

It localises to the nucleus. It is found in the chromosome. The protein localises to the centromere. Functionally, binds to centromeric K-type repeat DNA and ARS3002 DNA. The CBH-binding consensus sequence is Py-Pu-A-T-A-T-Py-Pu-T-A. The polypeptide is CENP-B homolog protein 1 (cbh1) (Schizosaccharomyces pombe (strain 972 / ATCC 24843) (Fission yeast)).